A 69-amino-acid polypeptide reads, in one-letter code: Putative defensin-like protein 312 (69 aa).

A signal peptide spans 1-19; the sequence is MSCFSFLVYFLLFIVTKMS. An intrachain disulfide couples Cys-45 to Cys-57.

This sequence belongs to the DEFL family.

The protein resides in the secreted. This is Putative defensin-like protein 312 from Arabidopsis thaliana (Mouse-ear cress).